The sequence spans 1097 residues: U3 small nucleolar RNA-associated protein 22 (1097 aa).

Composition is skewed to basic and acidic residues over residues 1 to 10 (MNGLKREHES) and 18 to 27 (KTPETEYDSH). The tract at residues 1 to 27 (MNGLKREHESSSSQDGSKTPETEYDSH) is disordered.

This sequence belongs to the NRAP family. As to quaternary structure, component of the ribosomal small subunit (SSU) processome.

It is found in the nucleus. The protein localises to the nucleolus. Involved in nucleolar processing of pre-18S ribosomal RNA and ribosome assembly. The sequence is that of U3 small nucleolar RNA-associated protein 22 from Schizosaccharomyces pombe (strain 972 / ATCC 24843) (Fission yeast).